Here is a 165-residue protein sequence, read N- to C-terminus: Peptide deformylase (165 aa).

The Fe cation site is built by Cys88 and His130. Glu131 is an active-site residue. His134 lines the Fe cation pocket.

The protein belongs to the polypeptide deformylase family. Fe(2+) is required as a cofactor.

It catalyses the reaction N-terminal N-formyl-L-methionyl-[peptide] + H2O = N-terminal L-methionyl-[peptide] + formate. Removes the formyl group from the N-terminal Met of newly synthesized proteins. Requires at least a dipeptide for an efficient rate of reaction. N-terminal L-methionine is a prerequisite for activity but the enzyme has broad specificity at other positions. This chain is Peptide deformylase, found in Borreliella burgdorferi (strain ATCC 35210 / DSM 4680 / CIP 102532 / B31) (Borrelia burgdorferi).